A 326-amino-acid polypeptide reads, in one-letter code: Serine hydrolase-like protein (326 aa).

Residues 44-155 (PVLCLHGWAD…FLPTEVTDMF (112 aa)) form the AB hydrolase-1 domain. The active site involves serine 118.

It belongs to the AB hydrolase superfamily.

Probable serine hydrolase. The protein is Serine hydrolase-like protein (serhl) of Danio rerio (Zebrafish).